A 308-amino-acid chain; its full sequence is Methionine synthase (308 aa).

Positions 192, 194, 215, and 282 each coordinate Zn(2+).

Belongs to the archaeal MetE family. Zn(2+) serves as cofactor.

Its pathway is amino-acid biosynthesis; L-methionine biosynthesis via de novo pathway. Catalyzes the transfer of a methyl group to L-homocysteine resulting in methionine formation. Can use methylcobalamin and methylcobinamide as methyl donors, but methylcobalamin is not considered to be the physiological substrate. This chain is Methionine synthase, found in Methanocaldococcus jannaschii (strain ATCC 43067 / DSM 2661 / JAL-1 / JCM 10045 / NBRC 100440) (Methanococcus jannaschii).